An 862-amino-acid polypeptide reads, in one-letter code: Ubiquitin carboxyl-terminal hydrolase 13 (862 aa).

The UBP-type; degenerate zinc-finger motif lies at Q182 to M290. Positions 206, 209, 226, and 239 each coordinate Zn(2+). Positions T331–I860 constitute a USP domain. The active-site Nucleophile is the C340. 2 consecutive UBA domains span residues D647–H688 and Q722–H762. H822 (proton acceptor) is an active-site residue.

The protein belongs to the peptidase C19 family.

The catalysed reaction is Thiol-dependent hydrolysis of ester, thioester, amide, peptide and isopeptide bonds formed by the C-terminal Gly of ubiquitin (a 76-residue protein attached to proteins as an intracellular targeting signal).. With respect to regulation, specifically inhibited by spautin-1 (specific and potent autophagy inhibitor-1), a derivative of MBCQ that binds to USP13 and inhibits deubiquitinase activity. In terms of biological role, deubiquitinase that mediates deubiquitination of target proteins and is involved in various processes such as autophagy and endoplasmic reticulum-associated degradation (ERAD). The polypeptide is Ubiquitin carboxyl-terminal hydrolase 13 (USP13) (Gallus gallus (Chicken)).